The primary structure comprises 359 residues: Protein mab-21-like 2-A (359 aa).

Belongs to the mab-21 family.

It is found in the nucleus. Its subcellular location is the cytoplasm. In terms of biological role, required for normal development of the eye. May promote dorsalization of the developing embryo by antagonizing the ventralizing factor bmp4. Functional antagonism of bmp4 may require interaction with smad1. Required for gastrulation and subsequent neural development. May function as a transcriptional repressor. The protein is Protein mab-21-like 2-A (mab21l2-a) of Xenopus laevis (African clawed frog).